The primary structure comprises 462 residues: Dipeptidyl peptidase 1 (462 aa).

The N-terminal stretch at 1 to 24 is a signal peptide; that stretch reads MGPWTHSLRAALLLVLLGVCTVSS. N-linked (GlcNAc...) asparagine glycans are attached at residues Asn-29 and Asn-53. 2 disulfide bridges follow: Cys-30/Cys-118 and Cys-54/Cys-136. A propeptide spanning residues 135-229 is cleaved from the precursor; sequence ACFVGKKMAN…TDEIQQQILS (95 aa). Asn-144 is a glycosylation site (N-linked (GlcNAc...) asparagine). 3 cysteine pairs are disulfide-bonded: Cys-254–Cys-297, Cys-290–Cys-330, and Cys-320–Cys-336. The active site involves Cys-257. A glycan (N-linked (GlcNAc...) asparagine) is linked at Asn-275. The chloride site is built by Phe-301 and Tyr-303. Tyr-346 contacts chloride. Active-site residues include His-404 and Asn-426.

This sequence belongs to the peptidase C1 family. In terms of assembly, tetramer of heterotrimers consisting of exclusion domain, heavy- and light chains. Chloride serves as cofactor. As to expression, broadly distributed, but higher levels found in liver, spleen, intestine, lung and kidney.

The protein resides in the lysosome. The catalysed reaction is Release of an N-terminal dipeptide, Xaa-Yaa-|-Zaa-, except when Xaa is Arg or Lys, or Yaa or Zaa is Pro.. Its function is as follows. Thiol protease. Has dipeptidylpeptidase activity. Active against a broad range of dipeptide substrates composed of both polar and hydrophobic amino acids. Proline cannot occupy the P1 position and arginine cannot occupy the P2 position of the substrate. Can act as both an exopeptidase and endopeptidase. Activates serine proteases such as elastase, cathepsin G and granzymes A and B. The chain is Dipeptidyl peptidase 1 (Ctsc) from Rattus norvegicus (Rat).